The primary structure comprises 262 residues: MRFGLNIDHIVTLREVRKTYEPEILEALFIAKNTHKVDLITIHLREDKRHIQNEDVLRLLEISPLPINIECSINAHITDFLCSLKNKPSKVTIVPENRNEVTTEGGLDCSLKGLGETIKAYQNKGIEVSLFIDPLEDALHFAREHQVKQVEFHTGVYANLHNALYSNANNQIHAISALKEKSPKELKEELHNAFLQLRKMSKEAFFMGIMVCAGHGLNYSNVKELLKIPSLRELNIGHSVISKAVLVGLEKAILEMAQLIKR.

N6 is a binding site for 3-amino-2-oxopropyl phosphate. 8 to 9 (DH) serves as a coordination point for 1-deoxy-D-xylulose 5-phosphate. Residue R17 coordinates 3-amino-2-oxopropyl phosphate. The active-site Proton acceptor is H43. Residues R45 and H50 each coordinate 1-deoxy-D-xylulose 5-phosphate. The active-site Proton acceptor is the E70. T102 lines the 1-deoxy-D-xylulose 5-phosphate pocket. Catalysis depends on H215, which acts as the Proton donor. Residues G216 and 237–238 (GH) contribute to the 3-amino-2-oxopropyl phosphate site.

Belongs to the PNP synthase family. Homooctamer; tetramer of dimers.

It localises to the cytoplasm. The catalysed reaction is 3-amino-2-oxopropyl phosphate + 1-deoxy-D-xylulose 5-phosphate = pyridoxine 5'-phosphate + phosphate + 2 H2O + H(+). It participates in cofactor biosynthesis; pyridoxine 5'-phosphate biosynthesis; pyridoxine 5'-phosphate from D-erythrose 4-phosphate: step 5/5. Functionally, catalyzes the complicated ring closure reaction between the two acyclic compounds 1-deoxy-D-xylulose-5-phosphate (DXP) and 3-amino-2-oxopropyl phosphate (1-amino-acetone-3-phosphate or AAP) to form pyridoxine 5'-phosphate (PNP) and inorganic phosphate. In Helicobacter acinonychis (strain Sheeba), this protein is Pyridoxine 5'-phosphate synthase.